We begin with the raw amino-acid sequence, 108 residues long: MVTQKIYIELKAFDSCLLDRSARSIILTAKRSGARVNGPIFFPRKVMKFIVNRSTHVDKKSREQFEIRTHKRLISLPRANSTIIQALMSLQLPAGVDVKVKVIGGNNG.

The protein belongs to the universal ribosomal protein uS10 family. As to quaternary structure, part of the 30S ribosomal subunit.

Functionally, involved in the binding of tRNA to the ribosomes. The chain is Small ribosomal subunit protein uS10 from Ehrlichia canis (strain Jake).